Reading from the N-terminus, the 363-residue chain is Phosphoribosylformylglycinamidine cyclo-ligase (363 aa).

This sequence belongs to the AIR synthase family.

It localises to the cytoplasm. The catalysed reaction is 2-formamido-N(1)-(5-O-phospho-beta-D-ribosyl)acetamidine + ATP = 5-amino-1-(5-phospho-beta-D-ribosyl)imidazole + ADP + phosphate + H(+). It functions in the pathway purine metabolism; IMP biosynthesis via de novo pathway; 5-amino-1-(5-phospho-D-ribosyl)imidazole from N(2)-formyl-N(1)-(5-phospho-D-ribosyl)glycinamide: step 2/2. The chain is Phosphoribosylformylglycinamidine cyclo-ligase from Brucella anthropi (strain ATCC 49188 / DSM 6882 / CCUG 24695 / JCM 21032 / LMG 3331 / NBRC 15819 / NCTC 12168 / Alc 37) (Ochrobactrum anthropi).